Here is a 125-residue protein sequence, read N- to C-terminus: Protein JAZ13 (125 aa).

The EAR signature appears at 6 to 10; that stretch reads LDLHL. A disordered region spans residues 99–125; that stretch reads KKRSKSFTLTPNYTSSTSSSSSSLHNF. Residues 112-125 show a composition bias toward low complexity; sequence TSSTSSSSSSLHNF.

As to quaternary structure, monomer. Lack of homodimerization, and very weak or no interaction with AFPH2/NINJA and other JAZ proteins. Interacts (via EAR motif) with TPL. Interacts (via jas motif) with MYC2. Phosphorylated at multiple serine residues.

In terms of biological role, non-TIFY functional repressor of jasmonate (JA)-mediated growth and defense responses. Intrinsically resistant to JA-induced turnover, probably due to the absence of the canonical degron that strongly interacts with COI1 in the presence of JA-Ile in the TIFY/JAZ proteins. This is Protein JAZ13 from Arabidopsis thaliana (Mouse-ear cress).